A 322-amino-acid polypeptide reads, in one-letter code: GDSL esterase/lipase At2g04020 (322 aa).

A signal peptide spans 1–26; sequence MGLPSSLESYLLLILLSFLNVSTIYS. Residue S50 is the Nucleophile of the active site. N260 is a glycosylation site (N-linked (GlcNAc...) asparagine). Residues D296 and H299 contribute to the active site.

It belongs to the 'GDSL' lipolytic enzyme family.

The protein localises to the secreted. This chain is GDSL esterase/lipase At2g04020, found in Arabidopsis thaliana (Mouse-ear cress).